The sequence spans 161 residues: MKKFAFLTALFAACYLPNAYAHALYVFAQYDGQTLSGKSYYSDMTPAAETYLEVFRSGVSDPVLTGKTDRQGVFKLSIADVPHTTLKVVVEGDEGHRASVVAAHTSAENQSGADLMLLREDIAHLKDKIYLHDILGGIGYIVGIAGLIALRNARKIKQGRI.

The segment at residues 1 to 23 (MKKFAFLTALFAACYLPNAYAHA) is a signal peptide (or 21). A helical transmembrane segment spans residues 129-149 (IYLHDILGGIGYIVGIAGLIA).

It is found in the membrane. This is an uncharacterized protein from Haemophilus influenzae (strain ATCC 51907 / DSM 11121 / KW20 / Rd).